A 448-amino-acid chain; its full sequence is Na(+)-translocating NADH-quinone reductase subunit A (448 aa).

The protein belongs to the NqrA family. Composed of six subunits; NqrA, NqrB, NqrC, NqrD, NqrE and NqrF.

The catalysed reaction is a ubiquinone + n Na(+)(in) + NADH + H(+) = a ubiquinol + n Na(+)(out) + NAD(+). Its function is as follows. NQR complex catalyzes the reduction of ubiquinone-1 to ubiquinol by two successive reactions, coupled with the transport of Na(+) ions from the cytoplasm to the periplasm. NqrA to NqrE are probably involved in the second step, the conversion of ubisemiquinone to ubiquinol. This Glaesserella parasuis serovar 5 (strain SH0165) (Haemophilus parasuis) protein is Na(+)-translocating NADH-quinone reductase subunit A.